The primary structure comprises 179 residues: UPF0227 protein Shewmr4_1727 (179 aa).

This sequence belongs to the UPF0227 family.

This is UPF0227 protein Shewmr4_1727 from Shewanella sp. (strain MR-4).